Reading from the N-terminus, the 243-residue chain is Ubiquinone biosynthesis O-methyltransferase (243 aa).

Residues Arg44, Gly64, Asp85, and Met129 each coordinate S-adenosyl-L-methionine.

It belongs to the methyltransferase superfamily. UbiG/COQ3 family.

It carries out the reaction a 3-demethylubiquinol + S-adenosyl-L-methionine = a ubiquinol + S-adenosyl-L-homocysteine + H(+). The enzyme catalyses a 3-(all-trans-polyprenyl)benzene-1,2-diol + S-adenosyl-L-methionine = a 2-methoxy-6-(all-trans-polyprenyl)phenol + S-adenosyl-L-homocysteine + H(+). The protein operates within cofactor biosynthesis; ubiquinone biosynthesis. Its function is as follows. O-methyltransferase that catalyzes the 2 O-methylation steps in the ubiquinone biosynthetic pathway. This is Ubiquinone biosynthesis O-methyltransferase from Cronobacter sakazakii (strain ATCC BAA-894) (Enterobacter sakazakii).